The chain runs to 1358 residues: DNA mismatch repair protein Msh6 (1358 aa).

Residues 1 to 87 (MSRQSTLYSF…SSAQAVPPSS (87 aa)) form a disordered region. Ser-14, Ser-38, and Ser-40 each carry phosphoserine. Residues 25–46 (AEASRQGAAASGASASRGGDAA) show a composition bias toward low complexity. The residue at position 67 (Lys-67) is an N6-acetyllysine. Residues 76–87 (ASSSAQAVPPSS) show a composition bias toward low complexity. Residues Ser-91, Ser-137, Ser-200, Ser-219, and Ser-227 each carry the phosphoserine modification. The PWWP domain occupies 92–154 (PGDLVWAKME…KRMLKPYTGS (63 aa)). Positions 197 to 360 (DEPSEPEEEE…VSGGGNDSSG (164 aa)) are disordered. Acidic residues-rich tracts occupy residues 198–209 (EPSEPEEEEETE) and 219–231 (SEED…EEEA). Residues 240–249 (RSSRQVKKRR) are compositionally biased toward basic residues. Phosphoserine occurs at positions 252, 254, 256, and 261. The segment covering 263-273 (VEFKPDTKQEG) has biased composition (basic and acidic residues). Thr-269 is modified (phosphothreonine). 4 positions are modified to phosphoserine: Ser-274, Ser-275, Ser-279, and Ser-280. Residues 329-351 (LSETKSTLSAFSAPQNSESQTHV) are compositionally biased toward polar residues. Residue Thr-487 is modified to Phosphothreonine. Lys-503 carries the N6-acetyllysine modification. Ser-827 and Ser-932 each carry phosphoserine. Thr-1007 carries the post-translational modification Phosphothreonine. An ATP-binding site is contributed by 1132–1139 (GPNMGGKS).

This sequence belongs to the DNA mismatch repair MutS family. As to quaternary structure, component of the DNA mismatch repair (MMR) complex composed at least of MSH2, MSH3, MSH6, PMS1 and MLH1. Heterodimer consisting of MSH2-MSH6 (MutS alpha). Forms a ternary complex with MutL alpha (MLH1-PMS1). Interacts with MCM9. Part of the BRCA1-associated genome surveillance complex (BASC), which contains BRCA1, MSH2, MSH6, MLH1, ATM, BLM, PMS2 and the RAD50-MRE11-NBS1 protein complex. This association could be a dynamic process changing throughout the cell cycle and within subnuclear domains. Phosphorylated by PRKCZ, which may prevent MutS alpha degradation by the ubiquitin-proteasome pathway.

The protein localises to the nucleus. The protein resides in the chromosome. In terms of biological role, component of the post-replicative DNA mismatch repair system (MMR). Heterodimerizes with MSH2 to form MutS alpha, which binds to DNA mismatches thereby initiating DNA repair. When bound, MutS alpha bends the DNA helix and shields approximately 20 base pairs, and recognizes single base mismatches and dinucleotide insertion-deletion loops (IDL) in the DNA. After mismatch binding, forms a ternary complex with the MutL alpha heterodimer, which is thought to be responsible for directing the downstream MMR events, including strand discrimination, excision, and resynthesis. ATP binding and hydrolysis play a pivotal role in mismatch repair functions. The ATPase activity associated with MutS alpha regulates binding similar to a molecular switch: mismatched DNA provokes ADP--&gt;ATP exchange, resulting in a discernible conformational transition that converts MutS alpha into a sliding clamp capable of hydrolysis-independent diffusion along the DNA backbone. This transition is crucial for mismatch repair. MutS alpha may also play a role in DNA homologous recombination repair. Recruited on chromatin in G1 and early S phase via its PWWP domain that specifically binds trimethylated 'Lys-36' of histone H3 (H3K36me3): early recruitment to chromatin to be replicated allowing a quick identification of mismatch repair to initiate the DNA mismatch repair reaction. The chain is DNA mismatch repair protein Msh6 from Mus musculus (Mouse).